The following is a 360-amino-acid chain: Decorin (360 aa).

Residues 1–16 form the signal peptide; that stretch reads MKATIIFLLLAQVSWA. The propeptide occupies 17–30; that stretch reads GPFQQRGLFDFMLE. Ser-34 carries O-linked (Xyl...) (glycosaminoglycan) serine glycosylation. 2 disulfide bridges follow: Cys-55–Cys-61 and Cys-59–Cys-68. 12 LRR repeats span residues 74 to 94, 95 to 118, 119 to 142, 143 to 163, 164 to 187, 188 to 213, 214 to 234, 235 to 258, 259 to 282, 283 to 305, 306 to 335, and 336 to 360; these read DKVP…NNKI, TEIK…NNKI, SKIS…KNHL, KELP…ENEI, TKVR…TNPL, KSSG…DTNI, TTIP…GNKI, TKVD…FNSI, SAVD…NNKL, IKVP…NNNI, SAVG…SNPV, and QYWE…GNYK. Residue Asn-212 is glycosylated (N-linked (GlcNAc...) asparagine). N-linked (GlcNAc...) asparagine glycosylation is found at Asn-263 and Asn-304. A disulfide bridge links Cys-314 with Cys-347.

The protein belongs to the small leucine-rich proteoglycan (SLRP) family. SLRP class I subfamily. In terms of assembly, binds to type I and type II collagen, fibronectin and TGF-beta. Forms a ternary complex with MFAP2 and ELN. Interacts with DPT. In terms of processing, the attached glycosaminoglycan chain can be either chondroitin sulfate or dermatan sulfate depending upon the tissue of origin.

It localises to the secreted. It is found in the extracellular space. The protein resides in the extracellular matrix. Its function is as follows. May affect the rate of fibrils formation. This chain is Decorin (DCN), found in Equus caballus (Horse).